We begin with the raw amino-acid sequence, 1630 residues long: Separin (1630 aa).

The segment at 1016-1037 (SKHSTGLKLCDSPRSSSMTPRG) is disordered. A Peptidase C50 domain is found at 1443–1542 (EDNISMILNP…SAAMKYYGKL (100 aa)). Residue cysteine 1531 is part of the active site.

In terms of assembly, may bind calcium. Interacts with PDS1. Interacts with MCD1.

The protein localises to the nucleus. It localises to the cytoplasm. It is found in the cytoskeleton. The protein resides in the microtubule organizing center. Its subcellular location is the spindle pole body. It catalyses the reaction All bonds known to be hydrolyzed by this endopeptidase have arginine in P1 and an acidic residue in P4. P6 is often occupied by an acidic residue or by a hydroxy-amino-acid residue, the phosphorylation of which enhances cleavage.. With respect to regulation, it is inactivated via its interaction with PDS1, which probably covers its active site. PDS1 degradation at anaphase, liberates it and triggers MCD1 cleavage. Its function is as follows. Caspase-like protease, which plays a central role in the chromosome segregation by cleaving the MCD1/SCC1 subunit of the cohesin complex at the onset of anaphase. During most of the cell cycle, it is inactivated by securin/PDS1 protein. It also promotes anaphase spindle elongation. A component of the FEAR (CDC14 early anaphase release) network which promotes CDC14 release from the nucleolus during early anaphase. Cleaves SLK19. This Saccharomyces cerevisiae (strain ATCC 204508 / S288c) (Baker's yeast) protein is Separin (ESP1).